The sequence spans 457 residues: Cysteine--tRNA ligase (457 aa).

C27 provides a ligand contact to Zn(2+). Positions P29–N39 match the 'HIGH' region motif. 3 residues coordinate Zn(2+): C211, H236, and E240. The 'KMSKS' region signature appears at K269–S273. Residue K272 participates in ATP binding.

Belongs to the class-I aminoacyl-tRNA synthetase family. In terms of assembly, monomer. Zn(2+) is required as a cofactor.

It is found in the cytoplasm. The enzyme catalyses tRNA(Cys) + L-cysteine + ATP = L-cysteinyl-tRNA(Cys) + AMP + diphosphate. The chain is Cysteine--tRNA ligase from Ehrlichia ruminantium (strain Gardel).